The primary structure comprises 159 residues: MDAIATIVELVREVVEPVIEAPFELVDIEYGKIGSDMILSIFVDKPEGITLNDTADLTEIISPVLDTIKPDPFPEQYFLEITSPGLERPLKTKDAVAGAVGKYIHVGLYQAIDKQKVFEGTLLAFEEDELTMEYMDKTRKKTVRIPYSLVSKARLAVKL.

It belongs to the RimP family.

It is found in the cytoplasm. Its function is as follows. Required for maturation of 30S ribosomal subunits. The polypeptide is Ribosome maturation factor RimP (Streptococcus pneumoniae serotype 2 (strain D39 / NCTC 7466)).